The chain runs to 54 residues: Ferredoxin (54 aa).

4Fe-4S ferredoxin-type domains are found at residues 2–28 (HVIS…EGET) and 29–54 (KYVV…ISAE). Residues cysteine 8, cysteine 11, cysteine 14, cysteine 18, cysteine 36, cysteine 39, cysteine 42, and cysteine 46 each coordinate [4Fe-4S] cluster.

The cofactor is [4Fe-4S] cluster.

In terms of biological role, ferredoxins are iron-sulfur proteins that transfer electrons in a wide variety of metabolic reactions. The protein is Ferredoxin of Megasphaera elsdenii.